A 342-amino-acid chain; its full sequence is Holliday junction branch migration complex subunit RuvB (342 aa).

The tract at residues 1–21 (MSVEHSPVDPSAEPPEKAEEA) is disordered. The interval 1 to 184 (MSVEHSPVDP…FGFTAQLDYY (184 aa)) is large ATPase domain (RuvB-L). Residues Leu-23, Arg-24, Gly-65, Lys-68, Thr-69, Thr-70, 131–133 (EDF), Arg-174, Tyr-184, and Arg-221 contribute to the ATP site. Residue Thr-69 participates in Mg(2+) binding. A small ATPAse domain (RuvB-S) region spans residues 185–255 (EVADLERIVT…GAETALDLYE (71 aa)). The tract at residues 258–342 (PLGLDRLDRA…PPDSSGEGLF (85 aa)) is head domain (RuvB-H). 2 residues coordinate DNA: Arg-313 and Arg-318.

This sequence belongs to the RuvB family. As to quaternary structure, homohexamer. Forms an RuvA(8)-RuvB(12)-Holliday junction (HJ) complex. HJ DNA is sandwiched between 2 RuvA tetramers; dsDNA enters through RuvA and exits via RuvB. An RuvB hexamer assembles on each DNA strand where it exits the tetramer. Each RuvB hexamer is contacted by two RuvA subunits (via domain III) on 2 adjacent RuvB subunits; this complex drives branch migration. In the full resolvosome a probable DNA-RuvA(4)-RuvB(12)-RuvC(2) complex forms which resolves the HJ.

It localises to the cytoplasm. The enzyme catalyses ATP + H2O = ADP + phosphate + H(+). In terms of biological role, the RuvA-RuvB-RuvC complex processes Holliday junction (HJ) DNA during genetic recombination and DNA repair, while the RuvA-RuvB complex plays an important role in the rescue of blocked DNA replication forks via replication fork reversal (RFR). RuvA specifically binds to HJ cruciform DNA, conferring on it an open structure. The RuvB hexamer acts as an ATP-dependent pump, pulling dsDNA into and through the RuvAB complex. RuvB forms 2 homohexamers on either side of HJ DNA bound by 1 or 2 RuvA tetramers; 4 subunits per hexamer contact DNA at a time. Coordinated motions by a converter formed by DNA-disengaged RuvB subunits stimulates ATP hydrolysis and nucleotide exchange. Immobilization of the converter enables RuvB to convert the ATP-contained energy into a lever motion, pulling 2 nucleotides of DNA out of the RuvA tetramer per ATP hydrolyzed, thus driving DNA branch migration. The RuvB motors rotate together with the DNA substrate, which together with the progressing nucleotide cycle form the mechanistic basis for DNA recombination by continuous HJ branch migration. Branch migration allows RuvC to scan DNA until it finds its consensus sequence, where it cleaves and resolves cruciform DNA. In Cutibacterium acnes (strain DSM 16379 / KPA171202) (Propionibacterium acnes), this protein is Holliday junction branch migration complex subunit RuvB.